The sequence spans 223 residues: Type III pantothenate kinase (223 aa).

17-24 is an ATP binding site; sequence DIGNTHIH. Substrate contacts are provided by residues Tyr81 and 85 to 88; that span reads GIDR. The active-site Proton acceptor is Asp87. Residue Asp102 coordinates K(+). ATP is bound at residue Ser105. Thr157 is a binding site for substrate.

This sequence belongs to the type III pantothenate kinase family. Homodimer. The cofactor is NH4(+). K(+) is required as a cofactor.

The protein localises to the cytoplasm. The enzyme catalyses (R)-pantothenate + ATP = (R)-4'-phosphopantothenate + ADP + H(+). It functions in the pathway cofactor biosynthesis; coenzyme A biosynthesis; CoA from (R)-pantothenate: step 1/5. In terms of biological role, catalyzes the phosphorylation of pantothenate (Pan), the first step in CoA biosynthesis. This chain is Type III pantothenate kinase, found in Helicobacter pylori (strain HPAG1).